Reading from the N-terminus, the 201-residue chain is MSPDLLGALLVAAGYLAGSIPFGVVLGRLVLGVDVRTVGSGNIGATNVARAGGKKMGVLVLVLDAAKAIVPILVARRVLGGTPHAEFWVTAVAVAAFVGHLFPVWLGFKGGKGVATGLGIFAVLAPWAALAGLVGYAVAYGLTRISSVGSLTGTALCAAGGFATYGPRHPVSWAGLAIALLIFVRHRENIRRLVRGEEKKV.

5 helical membrane-spanning segments follow: residues 5–25, 55–75, 87–107, 118–138, and 164–184; these read LLGA…FGVV, KMGV…ILVA, FWVT…VWLG, LGIF…GYAV, and TYGP…LIFV.

This sequence belongs to the PlsY family. In terms of assembly, probably interacts with PlsX.

It localises to the cell inner membrane. It carries out the reaction an acyl phosphate + sn-glycerol 3-phosphate = a 1-acyl-sn-glycero-3-phosphate + phosphate. Its pathway is lipid metabolism; phospholipid metabolism. Catalyzes the transfer of an acyl group from acyl-phosphate (acyl-PO(4)) to glycerol-3-phosphate (G3P) to form lysophosphatidic acid (LPA). This enzyme utilizes acyl-phosphate as fatty acyl donor, but not acyl-CoA or acyl-ACP. This is Glycerol-3-phosphate acyltransferase from Anaeromyxobacter dehalogenans (strain 2CP-1 / ATCC BAA-258).